Here is a 157-residue protein sequence, read N- to C-terminus: Urease accessory protein UreE (157 aa).

It belongs to the UreE family.

It localises to the cytoplasm. Its function is as follows. Involved in urease metallocenter assembly. Binds nickel. Probably functions as a nickel donor during metallocenter assembly. This chain is Urease accessory protein UreE, found in Corynebacterium glutamicum (strain ATCC 13032 / DSM 20300 / JCM 1318 / BCRC 11384 / CCUG 27702 / LMG 3730 / NBRC 12168 / NCIMB 10025 / NRRL B-2784 / 534).